A 156-amino-acid polypeptide reads, in one-letter code: MSRRNAPKKRPISSDPIYRSRLVSMVISHILKNGKKSLAHRILYQAMKNIEEKTEKDPLKILQQAVLNATPLVEVKARRIGGSTYQVPREVKPERGTALALRWLLSSARKRPGRDMASKLTNELLDAANEVGNAIRKREETHRMAEANKAFSHYRF.

Belongs to the universal ribosomal protein uS7 family. In terms of assembly, part of the 30S ribosomal subunit.

The protein localises to the plastid. The protein resides in the chloroplast. One of the primary rRNA binding proteins, it binds directly to 16S rRNA where it nucleates assembly of the head domain of the 30S subunit. The chain is Small ribosomal subunit protein uS7c (rps7) from Chlorokybus atmophyticus (Soil alga).